The sequence spans 147 residues: RxLR effector protein Avr3a (147 aa).

The signal sequence occupies residues Met-1–Ala-21. The RxLR-dEER signature appears at Arg-44–Arg-59. Position 48 is an N6-acetyllysine (Lys-48). The tract at residues Ala-77–Tyr-147 is effector domain.

Belongs to the RxLR effector family. As to quaternary structure, forms homodimers via the RxLR-dEER motif. Interacts with host E3 ligase CMPG1. Interacts with host DRP2. Post-translationally, proteolytically cleaved. The cleavage site directly after the RxLR sequence and the high conservation among other effector proteins suggest that the RxLR motif might play a crucial role in the intracellular processing before secretion. Glycosylated. In terms of processing, N-acetylated at Lys-48 after cleavage.

It localises to the secreted. The protein localises to the host cytoplasm. Its function is as follows. Multifunctional effector that can suppress host BAK1/SERK3-mediated immunity through at least two different pathways. Manipulates plant immunity by targeting and stabilizing host E3 ligase CMPG1. Preventing the normal 26S proteasome-dependent degradation of potato CMPG1, and thus potentially of its protein substrates in the host cell, further abolishes host cell death during the biotrophic phase of infection. Also associates with and affects the function of the dynamin-related protein 2 (DRP2), a plant GTPase involved in immune receptor-mediated endocytosis. The Avr3a(EM) form evades recognition by R3a, thus does not trigger R3a-mediated hypersensitivity and does not suppress INF1-induced cell death. The polypeptide is RxLR effector protein Avr3a (Phytophthora infestans (Potato late blight agent)).